A 145-amino-acid chain; its full sequence is D-aminoacyl-tRNA deacylase (145 aa).

The Gly-cisPro motif, important for rejection of L-amino acids signature appears at 137–138 (GP).

It belongs to the DTD family. Homodimer.

It is found in the cytoplasm. It carries out the reaction glycyl-tRNA(Ala) + H2O = tRNA(Ala) + glycine + H(+). The catalysed reaction is a D-aminoacyl-tRNA + H2O = a tRNA + a D-alpha-amino acid + H(+). In terms of biological role, an aminoacyl-tRNA editing enzyme that deacylates mischarged D-aminoacyl-tRNAs. Also deacylates mischarged glycyl-tRNA(Ala), protecting cells against glycine mischarging by AlaRS. Acts via tRNA-based rather than protein-based catalysis; rejects L-amino acids rather than detecting D-amino acids in the active site. By recycling D-aminoacyl-tRNA to D-amino acids and free tRNA molecules, this enzyme counteracts the toxicity associated with the formation of D-aminoacyl-tRNA entities in vivo and helps enforce protein L-homochirality. The protein is D-aminoacyl-tRNA deacylase of Salmonella enteritidis PT4 (strain P125109).